A 517-amino-acid polypeptide reads, in one-letter code: Serine carboxypeptidase ctsa-3.2 (517 aa).

The N-terminal stretch at 1-21 (MWWTSLVFSVLLFDLIFISNC) is a signal peptide. Residue Ser172 is part of the active site. N-linked (GlcNAc...) asparagine glycosylation occurs at Asn269. Catalysis depends on residues Asp418 and His485.

The protein belongs to the peptidase S10 family.

The sequence is that of Serine carboxypeptidase ctsa-3.2 from Caenorhabditis elegans.